The following is a 249-amino-acid chain: Fatty acid elongase 5 (249 aa).

3 helical membrane-spanning segments follow: residues 23–43, 68–88, and 100–120; these read VFVNYPVLIGCHIGYLVVIVL, VALSLVMAINLGQFLVYGVFN, and WIFVHYATKFLDMFDTYFIVL. Residues 131–135 carry the HxxHH motif motif; it reads HIYHH. Catalysis depends on His134, which acts as the Nucleophile. Transmembrane regions (helical) follow at residues 138-158, 159-179, 193-213, and 217-236; these read IGFIWGLLLHHGVANGTAFFG, AWINSAVHALMYFHYLYTSLG, MIQFALCILHAVLAVVAHSPI, and WAVLQLCYHLTLLYLFMRFY.

Belongs to the ELO family.

It is found in the membrane. The catalysed reaction is an acyl-CoA + malonyl-CoA + H(+) = a 3-oxoacyl-CoA + CO2 + CoA. Its pathway is lipid metabolism; polyunsaturated fatty acid biosynthesis. In terms of biological role, involved in the synthesis of fatty acids. Elongates C20 polyunsaturated fatty acids (PUFAs) with a preference for n-6 PUFAs. The polypeptide is Fatty acid elongase 5 (Leishmania major).